The chain runs to 636 residues: Ligand-gated ion channel 4 (636 aa).

An N-terminal signal peptide occupies residues 1–25; the sequence is MVICHSCTTFCILLVIDLVPCRIVG. Topologically, residues 26-326 are extracellular; sequence MENVENRVMF…IHMHRRPLFY (301 aa). 4 N-linked (GlcNAc...) asparagine glycosylation sites follow: Asn45, Asn141, Asn179, and Asn227. Cysteines 240 and 254 form a disulfide. N-linked (GlcNAc...) asparagine glycosylation is present at Asn284. Transmembrane regions (helical) follow at residues 327-347, 357-377, and 383-403; these read VFNH…GFLM, MIIT…ESIP, and VPLI…ATCV. Over 404 to 602 the chain is Cytoplasmic; sequence NVITLNMHRN…QLASVVDRLL (199 aa). A helical transmembrane segment spans residues 603–623; that stretch reads LCLFCTATLFTIICLLIVPVV.

It belongs to the ligand-gated ion channel (TC 1.A.9) family.

Its subcellular location is the postsynaptic cell membrane. It is found in the cell membrane. Its function is as follows. Acetylcholine receptor. The chain is Ligand-gated ion channel 4 from Caenorhabditis briggsae.